Reading from the N-terminus, the 242-residue chain is Glucosamine-6-phosphate deaminase (242 aa).

The active-site Proton acceptor; for enolization step is the Asp67. The For ring-opening step role is filled by Asn136. His138 acts as the Proton acceptor; for ring-opening step in catalysis. The active-site For ring-opening step is the Glu143.

Belongs to the glucosamine/galactosamine-6-phosphate isomerase family. NagB subfamily.

It catalyses the reaction alpha-D-glucosamine 6-phosphate + H2O = beta-D-fructose 6-phosphate + NH4(+). It participates in amino-sugar metabolism; N-acetylneuraminate degradation; D-fructose 6-phosphate from N-acetylneuraminate: step 5/5. Its function is as follows. Catalyzes the reversible isomerization-deamination of glucosamine 6-phosphate (GlcN6P) to form fructose 6-phosphate (Fru6P) and ammonium ion. The chain is Glucosamine-6-phosphate deaminase from Clostridium beijerinckii (strain ATCC 51743 / NCIMB 8052) (Clostridium acetobutylicum).